The primary structure comprises 248 residues: 2,3-bisphosphoglycerate-dependent phosphoglycerate mutase (248 aa).

Residues 8–15, 21–22, R60, 87–90, K98, 114–115, and 183–184 contribute to the substrate site; these read RHGESVWN, TG, ERHY, RR, and GN. H9 serves as the catalytic Tele-phosphohistidine intermediate. The active-site Proton donor/acceptor is E87.

This sequence belongs to the phosphoglycerate mutase family. BPG-dependent PGAM subfamily.

The enzyme catalyses (2R)-2-phosphoglycerate = (2R)-3-phosphoglycerate. The protein operates within carbohydrate degradation; glycolysis; pyruvate from D-glyceraldehyde 3-phosphate: step 3/5. Its function is as follows. Catalyzes the interconversion of 2-phosphoglycerate and 3-phosphoglycerate. The protein is 2,3-bisphosphoglycerate-dependent phosphoglycerate mutase of Brachyspira hyodysenteriae (strain ATCC 49526 / WA1).